An 888-amino-acid chain; its full sequence is MTSERYNARESEPKWQRRWDDDKIFATQNDDPRPKYYVLEMFPYPSGRIHMGHVRNYTMGDVVARTMRARGFNVLHPMGWDAFGLPAENAAIERKVAPKAWTYDNIAAMKKQLQTMGLSLDWAREFATCDPSYYKHQQKMFLDFLKAGLAEREKRKINWDPVDMTVLANEQVIDGRGWRSGAVVEQREMNQWVFKITRYSQDLLDALDRLDRWPDKVRLMQRNWIGRSEGMLVRFALDAATTPAGESELKIFTTRADTLFGAKFMAIAADHPLALAAAPKNPKIKDFIDECKKRGTAQADIDTAEKQGIDTGIRAVHPFDPEWKLPVYVANFVLMEYGTGAIFGCPAHDQRDLDFVNKYDLGNTPVVCPEGQDPASFVITDVAYDGDGRLINSRFLDGLSIDQAKEEVAKRLETATRDGAPIGERKVNFRLRDWGISRQRYWGCPIPVIHCPKCDVVPVPDADLPVVLPEDVSFDKPGNALDHHPTWKHVTCPKCGGKAVRETDTMDTFVDSSWYFARFTDPWNENAPTTPDVVNKMMPVDQYIGGVEHAILHLLYSRFFTRAMKATGHVGLDEPFAGMFTQGMVVHETYRRKSGEWVSPAELDATMTIESIATDASGEAKTTTKRKVWLRETGEELEIGPIEKMSKSKRNTVDPDDIIGTYGADTARWFMLSDSPPDRDVIWSEEGVKGASRFVQRLWRIANDAAEIAKLAPADRPAEFGPDAIAVRKAAHGALHKVLNGIERLAFNVSLAHIREFANALADSLGKADKPTPDLAFAIREAAIILVQLVAPMMPHLAEECWEVLGQAGLVSEAGWPAVEPALLVEDTITLPVQVNGKKRGDVTVARDAQNPQIEAAVLALDTVKQALDGKPVRKIIIVPQRIVNVVV.

A 'HIGH' region motif is present at residues 43-53 (PYPSGRIHMGH). A 'KMSKS' region motif is present at residues 644 to 648 (KMSKS). K647 provides a ligand contact to ATP.

It belongs to the class-I aminoacyl-tRNA synthetase family.

The protein resides in the cytoplasm. It catalyses the reaction tRNA(Leu) + L-leucine + ATP = L-leucyl-tRNA(Leu) + AMP + diphosphate. The sequence is that of Leucine--tRNA ligase from Rhodopseudomonas palustris (strain BisA53).